Here is a 990-residue protein sequence, read N- to C-terminus: F-box/LRR-repeat protein 15 (990 aa).

In terms of domain architecture, F-box spans 190–236 (FEVHIDLTDDLLHMVFSFLNHVDLCRSAMVCRQWRVASAHEDFWRVL). LRR repeat units follow at residues 237–258 (NFEN…YPNA), 280–303 (LRNL…ALGE), 317–341 (LGNG…KCRV), 348–373 (CPQL…LLQL), 397–423 (LESL…CANL), 441–465 (LPML…WIAN), 466–477 (SPALEVLELDNC), 478–503 (NLLT…KFTD), 519–542 (CPAL…KQEN), 550–574 (CHSL…IFSD), 589–612 (CESL…GCRA), 614–633 (TSLE…GCDH), 640–652 (QPVA…LGIC), 653–678 (PKLS…VLSE), 734–756 (LPNL…VFKS), 758–782 (IQLK…LYKE), 785–809 (LPAL…LLAC), 813–839 (LTHL…LFDY), 882–893 (FYHLSTLNLSLS), 894–914 (VNLK…LSNC), 915–937 (CSLE…SCNM), and 949–973 (CSSL…KFRT).

This is F-box/LRR-repeat protein 15 (FBL15) from Arabidopsis thaliana (Mouse-ear cress).